The primary structure comprises 219 residues: Proline-rich protein 27 (219 aa).

A signal peptide spans 1-15 (MKLLLWACIVCVAFA). The segment covering 155–204 (AAEPAAEAPVGAEPAAEAPVAAEPAAEAPVGVEPAAEEPSPAEPATAKPA) has biased composition (low complexity). A disordered region spans residues 155–219 (AAEPAAEAPV…PSPSLEQANQ (65 aa)).

The protein resides in the secreted. This Homo sapiens (Human) protein is Proline-rich protein 27 (PRR27).